Here is a 420-residue protein sequence, read N- to C-terminus: Histidine--tRNA ligase (420 aa).

This sequence belongs to the class-II aminoacyl-tRNA synthetase family. In terms of assembly, homodimer.

It is found in the cytoplasm. It carries out the reaction tRNA(His) + L-histidine + ATP = L-histidyl-tRNA(His) + AMP + diphosphate + H(+). This chain is Histidine--tRNA ligase, found in Saccharopolyspora erythraea (strain ATCC 11635 / DSM 40517 / JCM 4748 / NBRC 13426 / NCIMB 8594 / NRRL 2338).